Reading from the N-terminus, the 606-residue chain is MCGIFGYLGQRNAVPLVLEGLSKLEYRGYDSAGIAALTKDHLFVEKSVGPVSQLCSKVSSDMHSQVAIGHTRWATHGEPSRFNAHPHVDMYESCALVHNGIIENFQTLREDLSSKGVEFSSDTDTEVIVQLFASRYRETGDLVQSFSWTLKQLQGSFACALVHQDHPEILLCATYESPLILGLGEEEVFISSDVHAFLKYSCQIQTLASGELAVLRIGRPVEIYNFELSRIQKEVRCIDHAEGSLDKQGFDYYMLKEIYEQPEVFERILHFVCEENGFAESFLKEFSFEGIESLHIVACGSSYHAGCLAKYVIESMVSIPVYVETASEFRYRQPYIAKRSLAILISQSGETADTLAALNEFRKLDEVRVLGICNVRGSVLASRVDHCVFIEAGLEVGVASTKAFTAQLLVLILLGLKLASQRQEISKQDLMQAVQGLRELPRLTRLFLDSSIHDWRCRQSKETSFIFLGRRFMYPICMEAALKLKEIAYVEANAYPAGEMKHGPIALIQEGTPVIVYCGDPFVYTKTIGAIMEVKARKAYVIALARESNQDIAAVSDEQIYIPDSHDLAAPILFAIAGQIMAYTMALQKGTEVDRPRNLAKSVTVE.

The Nucleophile; for GATase activity role is filled by Cys-2. One can recognise a Glutamine amidotransferase type-2 domain in the interval 2–218 (CGIFGYLGQR…SGELAVLRIG (217 aa)). SIS domains lie at 278-424 (FAES…QRQE) and 455-596 (WRCR…VDRP). Lys-601 (for Fru-6P isomerization activity) is an active-site residue.

Homodimer.

Its subcellular location is the cytoplasm. It carries out the reaction D-fructose 6-phosphate + L-glutamine = D-glucosamine 6-phosphate + L-glutamate. Functionally, catalyzes the first step in hexosamine metabolism, converting fructose-6P into glucosamine-6P using glutamine as a nitrogen source. This chain is Glutamine--fructose-6-phosphate aminotransferase [isomerizing], found in Chlamydia muridarum (strain MoPn / Nigg).